The following is a 597-amino-acid chain: Putative lipase ATG15 (597 aa).

The Cytoplasmic portion of the chain corresponds to 1 to 15; sequence MTLEKNRHANKGTSW. Residues 16–36 traverse the membrane as a helical; Signal-anchor for type II membrane protein segment; it reads TWMIYKFVVGVITVAILVLFI. The Lumenal portion of the chain corresponds to 37–597; it reads TQKSVSQAQD…DDDEDTFERK (561 aa). 3 N-linked (GlcNAc...) asparagine glycosylation sites follow: Asn-195, Asn-262, and Asn-346. Ser-364 functions as the Charge relay system in the catalytic mechanism. N-linked (GlcNAc...) asparagine glycosylation is present at Asn-481. Residues 507–570 form a disordered region; the sequence is EKDEPKLPNP…PTDQDPPKKC (64 aa). Residues 519–554 are compositionally biased toward low complexity; that stretch reads SSSKSTLSTKTTSLKSSSTYSGSTSSSTVTKTTQTS.

Belongs to the AB hydrolase superfamily. Lipase family. In terms of assembly, binds to both phosphatidylinositol (PI) and phosphatidylinositol 3,5-bisphosphate (PIP2).

The protein resides in the endosome. It is found in the multivesicular body membrane. Its subcellular location is the prevacuolar compartment membrane. The enzyme catalyses a triacylglycerol + H2O = a diacylglycerol + a fatty acid + H(+). Lipase which is essential for lysis of subvacuolar cytoplasm to vacuole targeted bodies and intravacuolar autophagic bodies. Involved in the lysis of intravacuolar multivesicular body (MVB) vesicles. The intravacuolar membrane disintegration by ATG15 is critical to life span extension. The polypeptide is Putative lipase ATG15 (ATG15) (Candida albicans (strain SC5314 / ATCC MYA-2876) (Yeast)).